The primary structure comprises 298 residues: Inosose dehydratase (298 aa).

This sequence belongs to the IolE/MocC family. The cofactor is glutathione. Requires Co(2+) as cofactor. Mn(2+) serves as cofactor.

The catalysed reaction is scyllo-inosose = 3D-3,5/4-trihydroxycyclohexane-1,2-dione + H2O. In terms of biological role, catalyzes the dehydration of inosose (2-keto-myo-inositol, 2KMI or 2,4,6/3,5-pentahydroxycyclohexanone) to 3D-(3,5/4)-trihydroxycyclohexane-1,2-dione (D-2,3-diketo-4-deoxy-epi-inositol). In Erwinia tasmaniensis (strain DSM 17950 / CFBP 7177 / CIP 109463 / NCPPB 4357 / Et1/99), this protein is Inosose dehydratase.